A 148-amino-acid chain; its full sequence is 3-dehydroquinate dehydratase (148 aa).

The active-site Proton acceptor is the Tyr-22. The substrate site is built by Asn-73, His-79, and Asp-86. The Proton donor role is filled by His-99. Residues 100–101 and Arg-110 each bind substrate; that span reads LS.

It belongs to the type-II 3-dehydroquinase family. Homododecamer.

It catalyses the reaction 3-dehydroquinate = 3-dehydroshikimate + H2O. The protein operates within metabolic intermediate biosynthesis; chorismate biosynthesis; chorismate from D-erythrose 4-phosphate and phosphoenolpyruvate: step 3/7. In terms of biological role, catalyzes a trans-dehydration via an enolate intermediate. The chain is 3-dehydroquinate dehydratase from Prochlorococcus marinus (strain MIT 9211).